Consider the following 677-residue polypeptide: Potassium channel KAT1 (677 aa).

Over 1-63 (MSISWTRNFF…PFNPRYRAWE (63 aa)) the chain is Cytoplasmic. The helical transmembrane segment at 64 to 84 (MWLVLLVIYSAWICPFQFAFI) threads the bilayer. Over 85–90 (TYKKDA) the chain is Extracellular. A helical transmembrane segment spans residues 91 to 111 (IFIIDNIVNGFFAIDIILTFF). Over 112–134 (VAYLDSHSYLLVDSPKKIAIRYL) the chain is Cytoplasmic. The helical transmembrane segment at 135–155 (STWFAFDVCSTAPFQPLSLLF) threads the bilayer. The Extracellular portion of the chain corresponds to 156–165 (NYNGSELGFR). A helical; Voltage-sensor membrane pass occupies residues 166 to 186 (ILSMLRLWRLRRVSSLFARLE). The Cytoplasmic portion of the chain corresponds to 187–200 (KDIRFNYFWIRCTK). The chain crosses the membrane as a helical span at residues 201-221 (LISVTLFAIHCAGCFNYLIAD). Topologically, residues 222-248 (RYPNPRKTWIGAVYPNFKEASLWNRYV) are extracellular. The pore-forming intramembrane region spans 249–268 (TALYWSITTLTTTGYGDFHA). The Extracellular portion of the chain corresponds to 269 to 272 (ENPR). Residues 273 to 293 (EMLFDIFFMMFNLGLTAYLIG) form a helical membrane-spanning segment. The Cytoplasmic portion of the chain corresponds to 294–677 (NMTNLVVHWT…DGDHLYFSSN (384 aa)). A nucleoside 3',5'-cyclic phosphate is bound at residue 377–496 (LFQGVSRNFL…RVIMNNLFMK (120 aa)). Basic and acidic residues predominate over residues 568–577 (IERAKVERSS). The segment at 568–601 (IERAKVERSSSETAGRSYANDSSKKDPYCSSSNQ) is disordered. One can recognise a KHA domain in the interval 612 to 677 (RVTIHMMSES…DGDHLYFSSN (66 aa)).

It belongs to the potassium channel family. Plant (TC 1.A.1.4) subfamily. In terms of assembly, the potassium channel is probably composed of a homo- or heterotetrameric complex of pore-forming subunits. May interact with AKT2 and KAT2. Interacts with SLAC1 and SLAH3. As to expression, expressed in guard cells, and in roots.

It is found in the membrane. Its function is as follows. Highly selective inward-rectifying potassium channel. This voltage-gated channel could mediate long-term potassium influx into guard cells leading to stomatal opening. Assuming opened or closed conformations in response to the voltage difference across the membrane, the channel is activated by hyperpolarization. The channel activity is enhanced upon external acidification. Also permeable to ammonium ions. Blocked by tetraethylammonium and barium ions. The polypeptide is Potassium channel KAT1 (KAT1) (Arabidopsis thaliana (Mouse-ear cress)).